The sequence spans 475 residues: Ribulose bisphosphate carboxylase large chain (475 aa).

The propeptide occupies Met1–Ser2. At Pro3 the chain carries N-acetylproline. Residue Lys14 is modified to N6,N6,N6-trimethyllysine. Residues Asn123 and Thr173 each coordinate substrate. The active-site Proton acceptor is Lys175. A substrate-binding site is contributed by Lys177. Mg(2+) is bound by residues Lys201, Asp203, and Glu204. Residue Lys201 is modified to N6-carboxylysine. His294 serves as the catalytic Proton acceptor. Substrate-binding residues include Arg295, His327, and Ser379.

The protein belongs to the RuBisCO large chain family. Type I subfamily. In terms of assembly, heterohexadecamer of 8 large chains and 8 small chains; disulfide-linked. The disulfide link is formed within the large subunit homodimers. The cofactor is Mg(2+). In terms of processing, the disulfide bond which can form in the large chain dimeric partners within the hexadecamer appears to be associated with oxidative stress and protein turnover.

It is found in the plastid. Its subcellular location is the chloroplast. It catalyses the reaction 2 (2R)-3-phosphoglycerate + 2 H(+) = D-ribulose 1,5-bisphosphate + CO2 + H2O. The enzyme catalyses D-ribulose 1,5-bisphosphate + O2 = 2-phosphoglycolate + (2R)-3-phosphoglycerate + 2 H(+). Its function is as follows. RuBisCO catalyzes two reactions: the carboxylation of D-ribulose 1,5-bisphosphate, the primary event in carbon dioxide fixation, as well as the oxidative fragmentation of the pentose substrate in the photorespiration process. Both reactions occur simultaneously and in competition at the same active site. The protein is Ribulose bisphosphate carboxylase large chain of Pinus thunbergii (Japanese black pine).